A 249-amino-acid polypeptide reads, in one-letter code: Major phosphate-irrepressible acid phosphatase (249 aa).

Residues 1-20 (MKKNIIAGCLFSLFSLSALA) form the signal peptide.

Belongs to the class A bacterial acid phosphatase family. As to quaternary structure, homotetramer.

It is found in the periplasm. It catalyses the reaction a phosphate monoester + H2O = an alcohol + phosphate. This Morganella morganii (Proteus morganii) protein is Major phosphate-irrepressible acid phosphatase (phoC).